Consider the following 613-residue polypeptide: Serine protease FAM111A (613 aa).

The interval 1–72 (MSCKKRKSQI…TRQDQTPPLN (72 aa)) is disordered. Lys19 participates in a covalent cross-link: Glycyl lysine isopeptide (Lys-Gly) (interchain with G-Cter in SUMO2). The residue at position 25 (Ser25) is a Phosphoserine. A Glycyl lysine isopeptide (Lys-Gly) (interchain with G-Cter in SUMO2) cross-link involves residue Lys29. The span at 40 to 56 (VDSKKMPRDITNTRDQR) shows a compositional bias: basic and acidic residues. A Glycyl lysine isopeptide (Lys-Gly) (interchain with G-Cter in SUMO2) cross-link involves residue Lys62. Active-site charge relay system residues include His383, Asp437, and Ser543.

The protein belongs to the FAM111 family. In terms of assembly, interacts (via PIP-box) with PCNA; this interaction is direct. In terms of processing, autocatalytically cleaved; autocatalytic cleavage takes place in trans.

It is found in the nucleus. Its subcellular location is the chromosome. The protein resides in the cytoplasm. Functionally, single-stranded DNA-binding serine protease that mediates the proteolytic cleavage of covalent DNA-protein cross-links (DPCs) during DNA synthesis, thereby playing a key role in maintaining genomic integrity. DPCs are highly toxic DNA lesions that interfere with essential chromatin transactions, such as replication and transcription, and which are induced by reactive agents, such as UV light or formaldehyde. Protects replication fork from stalling by removing DPCs, such as covalently trapped topoisomerase 1 (TOP1) adducts on DNA lesion, or poly(ADP-ribose) polymerase 1 (PARP1)-DNA complexes trapped by PARP inhibitors. Required for PCNA loading on replication sites. Promotes S-phase entry and DNA synthesis. The protein is Serine protease FAM111A of Mus musculus (Mouse).